Here is a 354-residue protein sequence, read N- to C-terminus: Guanine nucleotide-binding protein G(o) subunit alpha (354 aa).

Gly-2 carries the N-myristoyl glycine lipid modification. Cys-3 is lipidated: S-palmitoyl cysteine. Residues 32–354 (KDVKLLLLGA…ANNLRGCGLY (323 aa)) enclose the G-alpha domain. The interval 35–48 (KLLLLGAGESGKST) is G1 motif. Residues Glu-43, Lys-46, Ser-47, Thr-48, Ser-152, Leu-176, Arg-177, Thr-178, and Arg-179 each contribute to the GTP site. A Mg(2+)-binding site is contributed by Ser-47. Positions 174–182 (DILRTRVKT) are G2 motif. Thr-182 contributes to the Mg(2+) binding site. A G3 motif region spans residues 197 to 206 (FRLFDVGGQR). Gln-205 carries the 5-glutamyl histamine modification. The G4 motif stretch occupies residues 266-273 (ILFLNKKD). Asn-270, Asp-273, and Cys-325 together coordinate GTP. Positions 324-329 (TCATDT) are G5 motif. Cys-351 carries S-palmitoyl cysteine lipidation.

The protein belongs to the G-alpha family. G(i/o/t/z) subfamily. In terms of assembly, g proteins are composed of 3 units; alpha, beta and gamma. The alpha chain contains the guanine nucleotide binding site. Forms a complex with GNB1 and GNG3. Interacts with RGS14. Interacts with RGS16. Interacts with RGS19. Interacts (when palmitoylated) with ADGRG3. Histaminylated at Gln-205 residues by TGM2.

It is found in the cell membrane. The protein localises to the membrane. The enzyme catalyses GTP + H2O = GDP + phosphate + H(+). Its activity is regulated as follows. The GTPase activity is promoted by GTPAse activators, such as RGS14, RGS16 and RGS19. Its function is as follows. Guanine nucleotide-binding proteins (G proteins) function as transducers downstream of G protein-coupled receptors (GPCRs) in numerous signaling cascades. The alpha chain contains the guanine nucleotide binding site and alternates between an active, GTP-bound state and an inactive, GDP-bound state. Signaling by an activated GPCR promotes GDP release and GTP binding. The alpha subunit has a low GTPase activity that converts bound GTP to GDP, thereby terminating the signal. Both GDP release and GTP hydrolysis are modulated by numerous regulatory proteins. Signaling is mediated via effector proteins, such as adenylate cyclase. Inhibits adenylate cyclase activity, leading to decreased intracellular cAMP levels. The polypeptide is Guanine nucleotide-binding protein G(o) subunit alpha (GNAO1) (Bos taurus (Bovine)).